We begin with the raw amino-acid sequence, 194 residues long: Oligoribonuclease (194 aa).

Residues 11–174 enclose the Exonuclease domain; sequence LIWIDLEMTG…SDVRDSIDEL (164 aa). Tyr-132 is an active-site residue.

The protein belongs to the oligoribonuclease family.

The protein localises to the cytoplasm. In terms of biological role, 3'-to-5' exoribonuclease specific for small oligoribonucleotides. In Xanthomonas euvesicatoria pv. vesicatoria (strain 85-10) (Xanthomonas campestris pv. vesicatoria), this protein is Oligoribonuclease.